The following is a 457-amino-acid chain: 6-phosphofructo-2-kinase/fructose-2,6-bisphosphatase (457 aa).

Residues 1 to 20 (MEIPPGLETTKRKVAHSDEH) form a disordered region. Positions 1–244 (MEIPPGLETT…VYFLMNIHLL (244 aa)) are 6-phosphofructo-2-kinase. Positions 9-20 (TTKRKVAHSDEH) are enriched in basic and acidic residues. 36–44 (GLPARGKTY) lines the ATP pocket. Beta-D-fructose 6-phosphate-binding residues include Arg69 and Arg98. The active site involves Asp124. 2 residues coordinate beta-D-fructose 6-phosphate: Thr126 and Arg132. The active site involves Cys154. 163-168 (NVTDVK) contributes to the ATP binding site. Residues Lys168, Arg190, and Tyr194 each coordinate beta-D-fructose 6-phosphate. Residues 245-457 (PRSIYLTRHG…QLPLCDSPRD (213 aa)) are fructose-2,6-bisphosphatase. A beta-D-fructose 2,6-bisphosphate-binding site is contributed by Arg252. Catalysis depends on His253, which acts as the Tele-phosphohistidine intermediate. Positions 259 and 265 each coordinate beta-D-fructose 2,6-bisphosphate. Catalysis depends on Glu324, which acts as the Proton donor/acceptor. Positions 335, 349, 353, 364, 390, and 394 each coordinate beta-D-fructose 2,6-bisphosphate. Residue 346–349 (ADDR) participates in ATP binding. Residues 390–394 (QAVLR) and Tyr426 each bind ATP.

The protein in the C-terminal section; belongs to the phosphoglycerate mutase family.

It carries out the reaction beta-D-fructose 2,6-bisphosphate + H2O = beta-D-fructose 6-phosphate + phosphate. The enzyme catalyses beta-D-fructose 6-phosphate + ATP = beta-D-fructose 2,6-bisphosphate + ADP + H(+). In terms of biological role, synthesis and degradation of fructose 2,6-bisphosphate. The protein is 6-phosphofructo-2-kinase/fructose-2,6-bisphosphatase of Caenorhabditis elegans.